The primary structure comprises 213 residues: Embryo-specific protein ATS3 (213 aa).

Residues 1–21 (MTFPSLSVSFLFFAFIFVTHA) form the signal peptide. Positions 34–148 (CPYTVVVMTS…LNTWYGHNNC (115 aa)) constitute a PLAT domain. A disordered region spans residues 147–188 (NCNTTGRPSSPDLPPPHFPPEFPPETPTTPPPPPPRPSAASR). A glycan (N-linked (GlcNAc...) asparagine) is linked at asparagine 149. Positions 157-183 (PDLPPPHFPPEFPPETPTTPPPPPPRP) are enriched in pro residues.

In terms of tissue distribution, expressed in seeds. Expression is restricted to the developing embryo.

The protein resides in the secreted. Its function is as follows. May play a role during embryo development. In Arabidopsis thaliana (Mouse-ear cress), this protein is Embryo-specific protein ATS3.